A 207-amino-acid polypeptide reads, in one-letter code: Sodium/potassium-transporting ATPase subunit beta-1-interacting protein 1 (207 aa).

3 consecutive transmembrane segments (helical) span residues 2–22, 35–55, and 62–82; these read GKCSGRCTLVAFCCLQLVAAL, APILANFLHIMAVILGIFGTV, and LILYAAWLVLWVGWNAFIICF. Asn-100 carries N-linked (GlcNAc...) asparagine glycosylation. A helical transmembrane segment spans residues 147-167; it reads ALSSALQIFLALFGFVFACYV.

Belongs to the NKAIN family. As to quaternary structure, interacts with ATP1B1 C-terminus. In terms of tissue distribution, detected in the brain only and specifically in neurons. Expressed in multiple regions such as cerebral cortex, thalamus, hippocampus, olfactory bulb and brainstem as well as in cerebellum with high expression in granular cell layer.

It localises to the cell membrane. The polypeptide is Sodium/potassium-transporting ATPase subunit beta-1-interacting protein 1 (Nkain1) (Mus musculus (Mouse)).